Reading from the N-terminus, the 90-residue chain is Small ribosomal subunit protein uS15c (90 aa).

The protein belongs to the universal ribosomal protein uS15 family. In terms of assembly, part of the 30S ribosomal subunit.

The protein resides in the plastid. It localises to the chloroplast. This chain is Small ribosomal subunit protein uS15c (rps15), found in Phaseolus vulgaris (Kidney bean).